Reading from the N-terminus, the 159-residue chain is Small ribosomal subunit protein uS7c (159 aa).

A disordered region spans residues 137–159 (HAIRKKEETHKMAESNRAXAHYR). Residues 141-150 (KKEETHKMAE) are compositionally biased toward basic and acidic residues.

This sequence belongs to the universal ribosomal protein uS7 family. As to quaternary structure, part of the 30S ribosomal subunit.

It is found in the plastid. The protein localises to the chloroplast. Functionally, one of the primary rRNA binding proteins, it binds directly to 16S rRNA where it nucleates assembly of the head domain of the 30S subunit. This is Small ribosomal subunit protein uS7c (rps7) from Sciadopitys verticillata (Japanese umbrella-pine).